The following is a 299-amino-acid chain: dTDP-4-dehydrorhamnose reductase (299 aa).

NADH contacts are provided by residues 10–12 (GQV), D30, 39–40 (DF), and 63–65 (AHT). 11–12 (QV) serves as a coordination point for NADPH. NADPH-binding positions include 39-40 (DF), 63-65 (AHT), and Y102. 104–105 (TD) provides a ligand contact to dTDP-beta-L-rhamnose. Residues Y128 and K132 each coordinate NADH. Positions 128 and 132 each coordinate NADPH. Y128 (proton donor/acceptor) is an active-site residue. W153 contributes to the dTDP-beta-L-rhamnose binding site.

This sequence belongs to the dTDP-4-dehydrorhamnose reductase family. In terms of assembly, homodimer. The cofactor is Mg(2+).

The enzyme catalyses dTDP-beta-L-rhamnose + NADP(+) = dTDP-4-dehydro-beta-L-rhamnose + NADPH + H(+). It functions in the pathway carbohydrate biosynthesis; dTDP-L-rhamnose biosynthesis. The protein operates within bacterial outer membrane biogenesis; LPS O-antigen biosynthesis. In terms of biological role, involved in the biosynthesis of the dTDP-L-rhamnose which is an important component of lipopolysaccharide (LPS). Catalyzes the reduction of dTDP-6-deoxy-L-lyxo-4-hexulose to yield dTDP-L-rhamnose. RmlD uses NADH and NADPH nearly equally well. In Escherichia coli (strain K12), this protein is dTDP-4-dehydrorhamnose reductase.